A 182-amino-acid polypeptide reads, in one-letter code: Ribosome-recycling factor (182 aa).

This sequence belongs to the RRF family.

The protein localises to the cytoplasm. Its function is as follows. Responsible for the release of ribosomes from messenger RNA at the termination of protein biosynthesis. May increase the efficiency of translation by recycling ribosomes from one round of translation to another. The sequence is that of Ribosome-recycling factor from Hydrogenobaculum sp. (strain Y04AAS1).